The chain runs to 311 residues: Taste receptor type 2 member 40 (311 aa).

At 1 to 9 the chain is on the extracellular side; it reads MSSLFSSFC. Residues 10 to 30 form a helical membrane-spanning segment; sequence LVIAIFESVVGLLGNGTIVAV. Residues 31–55 are Cytoplasmic-facing; it reads SSTSCIRSKILSSYDVIVIFLSLSR. The helical transmembrane segment at 56–76 threads the bilayer; the sequence is FFLQLWMILDFLLIFFCQPSY. Residues 77–87 are Extracellular-facing; that stretch reads YEENLFVTFKT. Residues 88-108 form a helical membrane-spanning segment; sequence VFIFLNSYSFWFAAWLSVFYC. Over 109-128 the chain is Cytoplasmic; that stretch reads VKVASFTQSFLSWLKQRIAS. Residues 129-149 traverse the membrane as a helical segment; sequence LIPWMLITSSLFSFATSLPFF. Residues 150-178 lie on the Extracellular side of the membrane; sequence WDSYNAHSNFTTPLTMTNSSKRITTRKTN. A helical transmembrane segment spans residues 179–199; it reads LIFLILLCNVGIALPSIMLVF. Topologically, residues 200 to 235 are cytoplasmic; it reads SSILLIRSLWRHTRQMQNNATGFRDPSLEALIGAIK. A helical membrane pass occupies residues 236 to 256; the sequence is TVFSFLLLYITNFIALILILS. The Extracellular portion of the chain corresponds to 257–266; the sequence is DTFVPLSTEE. A helical membrane pass occupies residues 267–287; it reads AICVVVVAACPAGQSMVLIWS. The Cytoplasmic segment spans residues 288-311; that stretch reads NPRFRELLSSILHYVNSCVRARCS.

Belongs to the G-protein coupled receptor T2R family. In terms of tissue distribution, expressed in the oral cavity, as well as in the gastrointestinal tract, including in the upper palate, tongue, proventriculus, ventriculus, duodenum, jejunum, ileum, cecum and colon.

It is found in the cell membrane. Functionally, bitter taste receptor. Binds quinine, dextromethorphan, diphenhydramine, diphenidol, chlorpheniramine, diphenidol, chloramphenicol, chloroquine and coumarin, this latter being a weak agonist, as well as epiquinidine, ethylhydrocupreine and quinidine. The chain is Taste receptor type 2 member 40 (TAS2R40) from Gallus gallus (Chicken).